The primary structure comprises 166 residues: ATP synthase subunit b (166 aa).

A helical membrane pass occupies residues Q7–L27.

This sequence belongs to the ATPase B chain family. F-type ATPases have 2 components, F(1) - the catalytic core - and F(0) - the membrane proton channel. F(1) has five subunits: alpha(3), beta(3), gamma(1), delta(1), epsilon(1). F(0) has three main subunits: a(1), b(2) and c(10-14). The alpha and beta chains form an alternating ring which encloses part of the gamma chain. F(1) is attached to F(0) by a central stalk formed by the gamma and epsilon chains, while a peripheral stalk is formed by the delta and b chains.

It localises to the cell inner membrane. Functionally, f(1)F(0) ATP synthase produces ATP from ADP in the presence of a proton or sodium gradient. F-type ATPases consist of two structural domains, F(1) containing the extramembraneous catalytic core and F(0) containing the membrane proton channel, linked together by a central stalk and a peripheral stalk. During catalysis, ATP synthesis in the catalytic domain of F(1) is coupled via a rotary mechanism of the central stalk subunits to proton translocation. Component of the F(0) channel, it forms part of the peripheral stalk, linking F(1) to F(0). The polypeptide is ATP synthase subunit b (Flavobacterium psychrophilum (strain ATCC 49511 / DSM 21280 / CIP 103535 / JIP02/86)).